Consider the following 707-residue polypeptide: Probable potassium transporter 17 (707 aa).

A disordered region spans residues 1–25 (MDLEAGSIRPRSDGEGGGPAAGRET). The Cytoplasmic segment spans residues 1-34 (MDLEAGSIRPRSDGEGGGPAAGRETDDSNVWKDL). Residues 35-55 (FLAYKTLGVVFGGLVTSPLYV) traverse the membrane as a helical segment. The Extracellular segment spans residues 56–71 (YPSMNLSSPTEADYLG). Residue Asn-60 is glycosylated (N-linked (GlcNAc...) asparagine). A helical membrane pass occupies residues 72–92 (IYSIMFWTLTLIGVVKYVCIA). The Cytoplasmic portion of the chain corresponds to 93-157 (LNADDHGEGG…FFEQSITARR (65 aa)). A helical transmembrane segment spans residues 158–178 (VLLFVAVLGMCMLIGDGILTP). At 179–194 (AISVLSAIDGIRGPFP) the chain is on the extracellular side. The helical transmembrane segment at 195–215 (TVSKPVVEALSAAILIGLFLL) threads the bilayer. Over 216–222 (QKYGTSK) the chain is Cytoplasmic. Residues 223 to 243 (VSFLFSPIMAAWTFTTPIIGL) traverse the membrane as a helical segment. Residues 244–276 (YSIVHYYPGIFKAISPYYIVHFFLRNKRQGWQL) lie on the Extracellular side of the membrane. Residues 277–297 (LGGTVLCITGAEAMFADLGHF) traverse the membrane as a helical segment. Topologically, residues 298–305 (SKKAIQIA) are cytoplasmic. Residues 306 to 326 (FLSSIYPSLVLTYAGQTAYLI) form a helical membrane-spanning segment. Residues 327 to 343 (NNVNDFGDGFYKFVPRP) lie on the Extracellular side of the membrane. The helical transmembrane segment at 344–364 (VYWPMFVVATLAAIVASQSLI) threads the bilayer. The Cytoplasmic segment spans residues 365-402 (SATFSVIKQSVVLDYFPRVKVVHTSQHKEGEVYSPEIN). Residues 403 to 423 (YILMVLCVGVILGFGGGKAIG) traverse the membrane as a helical segment. Residues 424-427 (NAFG) lie on the Extracellular side of the membrane. Residues 428-448 (VVVIMVMLITTVLLTLVMIII) form a helical membrane-spanning segment. The Cytoplasmic portion of the chain corresponds to 449–454 (WRTPLV). Residues 455–475 (LAGLYFVPFFIMEGAYVSAVF) traverse the membrane as a helical segment. Over 476–480 (TKIPE) the chain is Extracellular. The helical transmembrane segment at 481-501 (GGWLPFAVSITLAMIMFGWYY) threads the bilayer. The Cytoplasmic segment spans residues 502-707 (GRQRKFEYEM…RVEIGMLYKV (206 aa)).

This sequence belongs to the HAK/KUP transporter (TC 2.A.72.3) family.

It localises to the membrane. Its function is as follows. High-affinity potassium transporter. In Oryza sativa subsp. japonica (Rice), this protein is Probable potassium transporter 17 (HAK17).